A 293-amino-acid chain; its full sequence is Elongation factor Ts (293 aa).

The segment at 80 to 83 is involved in Mg(2+) ion dislocation from EF-Tu; the sequence is TDFV.

Belongs to the EF-Ts family.

The protein resides in the cytoplasm. Associates with the EF-Tu.GDP complex and induces the exchange of GDP to GTP. It remains bound to the aminoacyl-tRNA.EF-Tu.GTP complex up to the GTP hydrolysis stage on the ribosome. This is Elongation factor Ts from Burkholderia vietnamiensis (strain G4 / LMG 22486) (Burkholderia cepacia (strain R1808)).